The sequence spans 227 residues: Germin-like protein 3-5 (227 aa).

The signal sequence occupies residues 1–29 (MEYGFKAAGLVFVVLLLQQAPVLIRATDA). Cysteine 36 and cysteine 51 are disulfide-bonded. The Cupin type-1 domain occupies 65–217 (SKIATGGDVN…ALRVDAGVVE (153 aa)). N-linked (GlcNAc...) asparagine glycosylation is found at asparagine 78 and asparagine 81. Residues histidine 114, histidine 116, glutamate 121, and histidine 163 each contribute to the Mn(2+) site.

The protein belongs to the germin family. As to quaternary structure, oligomer (believed to be a pentamer but probably hexamer).

The protein localises to the secreted. The protein resides in the extracellular space. Its subcellular location is the apoplast. Its function is as follows. May play a role in plant defense. Probably has no oxalate oxidase activity even if the active site is conserved. The polypeptide is Germin-like protein 3-5 (Oryza sativa subsp. japonica (Rice)).